The chain runs to 196 residues: Shikimate kinase (196 aa).

An ATP-binding site is contributed by 32–37 (GAGKSA). Residue Ser36 coordinates Mg(2+). Residues Asp54, Arg78, and Gly100 each contribute to the substrate site. Residue Arg138 coordinates ATP. A substrate-binding site is contributed by Arg157. Arg174 contacts ATP.

It belongs to the shikimate kinase family. As to quaternary structure, monomer. It depends on Mg(2+) as a cofactor.

Its subcellular location is the cytoplasm. It catalyses the reaction shikimate + ATP = 3-phosphoshikimate + ADP + H(+). It functions in the pathway metabolic intermediate biosynthesis; chorismate biosynthesis; chorismate from D-erythrose 4-phosphate and phosphoenolpyruvate: step 5/7. Catalyzes the specific phosphorylation of the 3-hydroxyl group of shikimic acid using ATP as a cosubstrate. The sequence is that of Shikimate kinase from Rhizobium leguminosarum bv. trifolii (strain WSM2304).